The following is a 70-amino-acid chain: Conotoxin Vc6.10 (70 aa).

Residues Met1–Ala19 form the signal peptide. A propeptide spanning residues Leu20–Asp40 is cleaved from the precursor. Disulfide bonds link Cys43–Cys57, Cys50–Cys62, and Cys56–Cys69.

Belongs to the conotoxin O2 superfamily. Expressed by the venom duct.

The protein localises to the secreted. Its function is as follows. Inhibits voltage-gated ion channels. This is Conotoxin Vc6.10 from Conus victoriae (Queen Victoria cone).